The primary structure comprises 862 residues: Ecdysone-induced protein 78C (862 aa).

Disordered regions lie at residues 28–83 (SSEQ…EEAL), 97–138 (LHFF…KQHH), 173–210 (ASLSPQQQQQRQHTHQQQQQQQQQQQHPGQQQHQLNCT), and 230–353 (ASNH…NNNN). The segment covering 37-46 (KQEDLIKDFT) has biased composition (basic and acidic residues). Acidic residues predominate over residues 47–82 (RDEEEQPSEEEAEEEDNEEDEEEEGEEEEEDEDEEA). Positions 105–119 (DSSTQGAYSEANSLE) are enriched in polar residues. 4 stretches are compositionally biased toward low complexity: residues 173-206 (ASLSPQQQQQRQHTHQQQQQQQQQQQHPGQQQHQ), 230-291 (ASNH…NNSV), 308-335 (QQQQPLPTTQLQQQQQHQQQLQHPQQQQ), and 342-353 (SSSSNGSSNNNN). The segment at residues 360 to 435 (FVPCKVCGDK…AGMSRDSVRY (76 aa)) is a DNA-binding region (nuclear receptor). 2 NR C4-type zinc fingers span residues 363-383 (CKVCGDKASGYHYGVTSCEGC) and 399-418 (CLRDGKCLVIRLNRNRCQYC). A disordered region spans residues 444–557 (ELNGAAASSA…NNNSSSGNAS (114 aa)). Positions 447–460 (GAAASSAAAGAPAS) are enriched in low complexity. The segment covering 463–472 (VDDSTSSTLH) has biased composition (polar residues). Low complexity predominate over residues 475–508 (HLQQQQQQHLLQQQQQQQHQPQLQQHHQLQQQPH). Residues 516–533 (TPSTPQTPQMCSIASSPS) show a composition bias toward polar residues. A compositionally biased stretch (low complexity) spans 539–555 (NSANNNNNNNNNSSSGN). The region spanning 626–855 (YTEELTRELM…PPLFAEIFDI (230 aa)) is the NR LBD domain.

Belongs to the nuclear hormone receptor family. NR1 subfamily.

It is found in the nucleus. Functionally, induces the early late puff 78C which triggers puparium formation and development. The chain is Ecdysone-induced protein 78C (Eip78C) from Drosophila melanogaster (Fruit fly).